Reading from the N-terminus, the 281-residue chain is Protoheme IX farnesyltransferase (281 aa).

The next 9 helical transmembrane spans lie at 16 to 36 (TFLLMITFLVSYIVARGGADF), 38 to 58 (FVIAAISMFLAISGTTAINMW), 75 to 95 (VPAGILKPSECAAFGAAIFAI), 101 to 121 (FLVSLEFGLVVFFGLFFDIVV), 129 to 149 (KSPYSIVLGGFAGAMPALGGW), 150 to 170 (VAVQGFTLPGFIIAAIVLLWI), 202 to 224 (ASWAIVFATAAMLVLAASLYVLL), 228 to 250 (IFYLVISTSAVAFFLYKAVKFAL), and 261 to 281 (YKLASMTLGLVYFSLLLGVFL).

This sequence belongs to the UbiA prenyltransferase family. Protoheme IX farnesyltransferase subfamily.

The protein resides in the cell membrane. The enzyme catalyses heme b + (2E,6E)-farnesyl diphosphate + H2O = Fe(II)-heme o + diphosphate. It participates in porphyrin-containing compound metabolism; heme O biosynthesis; heme O from protoheme: step 1/1. Converts heme B (protoheme IX) to heme O by substitution of the vinyl group on carbon 2 of heme B porphyrin ring with a hydroxyethyl farnesyl side group. This chain is Protoheme IX farnesyltransferase, found in Archaeoglobus fulgidus (strain ATCC 49558 / DSM 4304 / JCM 9628 / NBRC 100126 / VC-16).